Here is a 701-residue protein sequence, read N- to C-terminus: Ubiquitin thioesterase zranb1-B (701 aa).

3 RanBP2-type zinc fingers span residues 3-33 (EDGI…PRPS), 79-108 (TSSK…QRRT), and 143-173 (IKGQ…PTPN). Zn(2+) is bound by residues C10, C13, C24, C27, C85, C88, C99, and C102. Residues 108 to 121 (TRSPTESPQSSGSG) show a composition bias toward polar residues. Residues 108–129 (TRSPTESPQSSGSGLRSIPGPI) are disordered. Zn(2+) contacts are provided by C150, C153, C164, and C167. Positions 197–220 (RWRGGCSSSNSQRRSPPTSKRDSD) are disordered. Residues 202–214 (CSSSNSQRRSPPT) show a composition bias toward polar residues. ANK repeat units lie at residues 253-283 (RKTD…SGGD) and 306-333 (YTLV…QHAA). Residues 425-585 (LYALWNRTAG…RGHFSALVAM (161 aa)) form the OTU domain. Residue C436 is the Nucleophile of the active site. Catalysis depends on H578, which acts as the Proton acceptor.

This sequence belongs to the peptidase C64 family.

It localises to the cytoplasm. The protein resides in the nucleus. It carries out the reaction Thiol-dependent hydrolysis of ester, thioester, amide, peptide and isopeptide bonds formed by the C-terminal Gly of ubiquitin (a 76-residue protein attached to proteins as an intracellular targeting signal).. Its function is as follows. Ubiquitin thioesterase, which specifically hydrolyzes 'Lys-29'-linked and 'Lys-33'-linked diubiquitin. Also cleaves 'Lys-63'-linked chains, but with 40-fold less efficiency compared to 'Lys-29'-linked ones. Positive regulator of the Wnt signaling pathway that deubiquitinates apc protein, a negative regulator of Wnt-mediated transcription. Acts as a regulator of autophagy by mediating deubiquitination of pik3c3/vps34, thereby promoting autophagosome maturation. Plays a role in the regulation of cell morphology and cytoskeletal organization. Required in the stress fiber dynamics and cell migration. The protein is Ubiquitin thioesterase zranb1-B (zranb1-b) of Xenopus laevis (African clawed frog).